The following is a 130-amino-acid chain: Histone H2A type 1-D (130 aa).

A disordered region spans residues 1 to 22 (MSGRGKQGGKARAKAKTRSSRA). At serine 2 the chain carries N-acetylserine. A Phosphoserine; by RPS6KA5 modification is found at serine 2. At arginine 4 the chain carries Citrulline; alternate. Arginine 4 carries the symmetric dimethylarginine; by PRMT5; alternate modification. Lysine 6 and lysine 10 each carry N6-(2-hydroxyisobutyryl)lysine; alternate. At lysine 6 the chain carries N6-acetyllysine; alternate. The segment covering 7 to 19 (QGGKARAKAKTRS) has biased composition (basic residues). 2 positions are modified to N6-(beta-hydroxybutyryl)lysine; alternate: lysine 10 and lysine 14. Lysine 10 is subject to N6-lactoyllysine; alternate. Lysine 10 is modified (N6-succinyllysine; alternate). Lysine 14 participates in a covalent cross-link: Glycyl lysine isopeptide (Lys-Gly) (interchain with G-Cter in ubiquitin); alternate. Lysine 16 is covalently cross-linked (Glycyl lysine isopeptide (Lys-Gly) (interchain with G-Cter in ubiquitin)). Lysine 37 is subject to N6-(2-hydroxyisobutyryl)lysine; alternate. N6-(beta-hydroxybutyryl)lysine; alternate is present on lysine 37. Lysine 37 bears the N6-crotonyllysine; alternate mark. Residues lysine 75 and lysine 76 each carry the N6-(2-hydroxyisobutyryl)lysine modification. Lysine 96 is subject to N6-(2-hydroxyisobutyryl)lysine; alternate. Lysine 96 is modified (N6-(beta-hydroxybutyryl)lysine; alternate). Lysine 96 is modified (N6-succinyllysine; alternate). Lysine 96 carries the post-translational modification N6-glutaryllysine; alternate. Lysine 100 carries the post-translational modification N6-glutaryllysine. Glutamine 105 bears the N5-methylglutamine mark. Position 119 is an N6-(2-hydroxyisobutyryl)lysine; alternate (lysine 119). At lysine 119 the chain carries N6-(beta-hydroxybutyryl)lysine; alternate. Lysine 119 and lysine 120 each carry N6-crotonyllysine; alternate. An N6-glutaryllysine; alternate mark is found at lysine 119 and lysine 120. A Glycyl lysine isopeptide (Lys-Gly) (interchain with G-Cter in ubiquitin); alternate cross-link involves residue lysine 120. Position 121 is a phosphothreonine; by DCAF1 (threonine 121). An N6-crotonyllysine; alternate modification is found at lysine 126. Lysine 126 carries the N6-glutaryllysine; alternate modification.

Belongs to the histone H2A family. The nucleosome is a histone octamer containing two molecules each of H2A, H2B, H3 and H4 assembled in one H3-H4 heterotetramer and two H2A-H2B heterodimers. The octamer wraps approximately 147 bp of DNA. In terms of processing, deiminated on Arg-4 in granulocytes upon calcium entry. Post-translationally, monoubiquitination of Lys-120 (H2AK119Ub) by RING1, TRIM37 and RNF2/RING2 complex gives a specific tag for epigenetic transcriptional repression and participates in X chromosome inactivation of female mammals. It is involved in the initiation of both imprinted and random X inactivation. Ubiquitinated H2A is enriched in inactive X chromosome chromatin. Ubiquitination of H2A functions downstream of methylation of 'Lys-27' of histone H3 (H3K27me). H2AK119Ub by RNF2/RING2 can also be induced by ultraviolet and may be involved in DNA repair. Monoubiquitination of Lys-120 (H2AK119Ub) by TRIM37 may promote transformation of cells in a number of breast cancers. Following DNA double-strand breaks (DSBs), it is ubiquitinated through 'Lys-63' linkage of ubiquitin moieties by the E2 ligase UBE2N and the E3 ligases RNF8 and RNF168, leading to the recruitment of repair proteins to sites of DNA damage. Ubiquitination at Lys-14 and Lys-16 (H2AK13Ub and H2AK15Ub, respectively) in response to DNA damage is initiated by RNF168 that mediates monoubiquitination at these 2 sites, and 'Lys-63'-linked ubiquitin are then conjugated to monoubiquitin; RNF8 is able to extend 'Lys-63'-linked ubiquitin chains in vitro. Deubiquitinated by USP51 at Lys-14 and Lys-16 (H2AK13Ub and H2AK15Ub, respectively) after damaged DNA is repaired. H2AK119Ub and ionizing radiation-induced 'Lys-63'-linked ubiquitination (H2AK13Ub and H2AK15Ub) are distinct events. Phosphorylation on Ser-2 (H2AS1ph) is enhanced during mitosis. Phosphorylation on Ser-2 by RPS6KA5/MSK1 directly represses transcription. Acetylation of H3 inhibits Ser-2 phosphorylation by RPS6KA5/MSK1. Phosphorylation at Thr-121 (H2AT120ph) by DCAF1 is present in the regulatory region of many tumor suppresor genes and down-regulates their transcription. In terms of processing, glutamine methylation at Gln-105 (H2AQ104me) by FBL is specifically dedicated to polymerase I. It is present at 35S ribosomal DNA locus and impairs binding of the FACT complex. Post-translationally, symmetric dimethylation on Arg-4 by the PRDM1/PRMT5 complex may play a crucial role in the germ-cell lineage. Crotonylation (Kcr) is specifically present in male germ cells and marks testis-specific genes in post-meiotic cells, including X-linked genes that escape sex chromosome inactivation in haploid cells. Crotonylation marks active promoters and enhancers and confers resistance to transcriptional repressors. It is also associated with post-meiotically activated genes on autosomes. In terms of processing, lactylated in macrophages by EP300/P300 by using lactoyl-CoA directly derived from endogenous or exogenous lactate, leading to stimulates gene transcription.

It is found in the nucleus. The protein resides in the chromosome. Functionally, core component of nucleosome. Nucleosomes wrap and compact DNA into chromatin, limiting DNA accessibility to the cellular machineries which require DNA as a template. Histones thereby play a central role in transcription regulation, DNA repair, DNA replication and chromosomal stability. DNA accessibility is regulated via a complex set of post-translational modifications of histones, also called histone code, and nucleosome remodeling. The sequence is that of Histone H2A type 1-D from Homo sapiens (Human).